Reading from the N-terminus, the 364-residue chain is tRNA 2-selenouridine synthase (364 aa).

Residues 14-137 form the Rhodanese domain; it reads LIADTPIIDV…LRQTAIQATI (124 aa). The active-site S-selanylcysteine intermediate is the C97.

Belongs to the SelU family. In terms of assembly, monomer.

It catalyses the reaction 5-methylaminomethyl-2-thiouridine(34) in tRNA + selenophosphate + (2E)-geranyl diphosphate + H2O + H(+) = 5-methylaminomethyl-2-selenouridine(34) in tRNA + (2E)-thiogeraniol + phosphate + diphosphate. The enzyme catalyses 5-methylaminomethyl-2-thiouridine(34) in tRNA + (2E)-geranyl diphosphate = 5-methylaminomethyl-S-(2E)-geranyl-thiouridine(34) in tRNA + diphosphate. It carries out the reaction 5-methylaminomethyl-S-(2E)-geranyl-thiouridine(34) in tRNA + selenophosphate + H(+) = 5-methylaminomethyl-2-(Se-phospho)selenouridine(34) in tRNA + (2E)-thiogeraniol. The catalysed reaction is 5-methylaminomethyl-2-(Se-phospho)selenouridine(34) in tRNA + H2O = 5-methylaminomethyl-2-selenouridine(34) in tRNA + phosphate. Its function is as follows. Involved in the post-transcriptional modification of the uridine at the wobble position (U34) of tRNA(Lys), tRNA(Glu) and tRNA(Gln). Catalyzes the conversion of 2-thiouridine (S2U-RNA) to 2-selenouridine (Se2U-RNA). Acts in a two-step process involving geranylation of 2-thiouridine (S2U) to S-geranyl-2-thiouridine (geS2U) and subsequent selenation of the latter derivative to 2-selenouridine (Se2U) in the tRNA chain. This Escherichia coli O157:H7 protein is tRNA 2-selenouridine synthase.